The following is a 147-amino-acid chain: Ubiquitin-conjugating enzyme E2 D4 (147 aa).

In terms of domain architecture, UBC core spans 1–147 (MALKRIQKEL…AREWTQKYAM (147 aa)). Residue cysteine 85 is the Glycyl thioester intermediate of the active site.

This sequence belongs to the ubiquitin-conjugating enzyme family.

It carries out the reaction S-ubiquitinyl-[E1 ubiquitin-activating enzyme]-L-cysteine + [E2 ubiquitin-conjugating enzyme]-L-cysteine = [E1 ubiquitin-activating enzyme]-L-cysteine + S-ubiquitinyl-[E2 ubiquitin-conjugating enzyme]-L-cysteine.. The protein operates within protein modification; protein ubiquitination. Its function is as follows. Accepts ubiquitin from the E1 complex and catalyzes its covalent attachment to other proteins. In vitro able to promote polyubiquitination using all 7 ubiquitin Lys residues, but may prefer 'Lys-11' and 'Lys-48'-linked polyubiquitination. The chain is Ubiquitin-conjugating enzyme E2 D4 (UBE2D4) from Homo sapiens (Human).